The chain runs to 755 residues: Leucine-rich repeat-containing protein 36 (755 aa).

LRR repeat units follow at residues 51–72 and 73–94; these read SLRSLDLSRNLITSLKGIQYLC and SLQELNLYYNNIPSLVEVSRLQ. Residues 107-146 enclose the LRRCT domain; that stretch reads NPVVRKDTDYRLFAVYTLQTLEKLDDRAVRDSERRAAKLH. Disordered stretches follow at residues 354-374 and 448-517; these read GKNYREHSIKPSQDKKATTSH and LPPG…PPIS. Positions 356 to 370 are enriched in basic and acidic residues; that stretch reads NYREHSIKPSQDKKA. Residues 498-510 are compositionally biased toward low complexity; it reads LSSDLGSLHGLSG. Positions 601 to 671 form a coiled coil; sequence VESLKQKLVK…ELTQLKRLEE (71 aa). Residues 701-755 are disordered; that stretch reads YSGKSLLPPEKSHPLGRSSPFGKSTLSSSSPMVHDTGQYLIQSVSEADPEPSLWS. Over residues 721 to 731 the composition is skewed to polar residues; the sequence is FGKSTLSSSSP.

The sequence is that of Leucine-rich repeat-containing protein 36 (Lrrc36) from Mus musculus (Mouse).